The sequence spans 164 residues: MALNLQDKKAIVAEVNEAASGALSAVVADSRGVTVGAMTSLRKQAREAGVYMRVVRNTLARRAVEGTQYECLQDTFTGPSLLAFSNEHPGAAARLFKDFAKENKNFEIKAAAFEGAVTDADVLATLPTYDEAIARLMMCMKEASAGKLVRTIAAVRDQKEEAEA.

The protein belongs to the universal ribosomal protein uL10 family. In terms of assembly, part of the ribosomal stalk of the 50S ribosomal subunit. The N-terminus interacts with L11 and the large rRNA to form the base of the stalk. The C-terminus forms an elongated spine to which L12 dimers bind in a sequential fashion forming a multimeric L10(L12)X complex.

Functionally, forms part of the ribosomal stalk, playing a central role in the interaction of the ribosome with GTP-bound translation factors. This chain is Large ribosomal subunit protein uL10, found in Aliivibrio salmonicida (strain LFI1238) (Vibrio salmonicida (strain LFI1238)).